Consider the following 194-residue polypeptide: Peptidyl-tRNA hydrolase (194 aa).

Position 17 (tyrosine 17) interacts with tRNA. Histidine 22 functions as the Proton acceptor in the catalytic mechanism. TRNA-binding residues include tyrosine 68, asparagine 70, and asparagine 116.

The protein belongs to the PTH family. As to quaternary structure, monomer.

It is found in the cytoplasm. It catalyses the reaction an N-acyl-L-alpha-aminoacyl-tRNA + H2O = an N-acyl-L-amino acid + a tRNA + H(+). Functionally, hydrolyzes ribosome-free peptidyl-tRNAs (with 1 or more amino acids incorporated), which drop off the ribosome during protein synthesis, or as a result of ribosome stalling. Its function is as follows. Catalyzes the release of premature peptidyl moieties from peptidyl-tRNA molecules trapped in stalled 50S ribosomal subunits, and thus maintains levels of free tRNAs and 50S ribosomes. The chain is Peptidyl-tRNA hydrolase from Pseudomonas putida (strain ATCC 700007 / DSM 6899 / JCM 31910 / BCRC 17059 / LMG 24140 / F1).